The sequence spans 329 residues: NADH-quinone oxidoreductase subunit H (329 aa).

9 helical membrane-spanning segments follow: residues 9 to 29, 42 to 62, 75 to 95, 117 to 137, 154 to 174, 188 to 208, 238 to 258, 269 to 291, and 309 to 329; these read LIKI…ATYI, GPCY…IKLF, FIFT…MAPI, IGFL…ILAG, IQLL…LMVV, GGFL…FLIA, LKWG…SFVI, WGFI…LSMW, and WKIM…IILI.

The protein belongs to the complex I subunit 1 family. As to quaternary structure, NDH-1 is composed of 14 different subunits. Subunits NuoA, H, J, K, L, M, N constitute the membrane sector of the complex.

Its subcellular location is the cell inner membrane. The enzyme catalyses a quinone + NADH + 5 H(+)(in) = a quinol + NAD(+) + 4 H(+)(out). NDH-1 shuttles electrons from NADH, via FMN and iron-sulfur (Fe-S) centers, to quinones in the respiratory chain. The immediate electron acceptor for the enzyme in this species is believed to be ubiquinone. Couples the redox reaction to proton translocation (for every two electrons transferred, four hydrogen ions are translocated across the cytoplasmic membrane), and thus conserves the redox energy in a proton gradient. This subunit may bind ubiquinone. This Helicobacter pylori (strain P12) protein is NADH-quinone oxidoreductase subunit H.